The primary structure comprises 122 residues: SLMQFETMIMKVAGRSGVWWYGSYGCYCGKGGQGQPQDASDRCCFVHDCCYGKVNGCDPKDDFYTYSSENGDVVCEEDNPCTKEICECDKAAAICFRDNMDTYQNKYWFYPTKYCKEESEPC.

7 cysteine pairs are disulfide-bonded: C26–C115, C28–C44, C43–C95, C49–C122, C50–C88, C57–C81, and C75–C86. Residues Y27, G29, and G31 each coordinate Ca(2+). H47 is an active-site residue. Ca(2+) is bound at residue D48. D89 is an active-site residue.

Monomer. The cofactor is Ca(2+). As to expression, expressed by the venom gland.

It localises to the secreted. The catalysed reaction is a 1,2-diacyl-sn-glycero-3-phosphocholine + H2O = a 1-acyl-sn-glycero-3-phosphocholine + a fatty acid + H(+). Its function is as follows. Snake venom phospholipase A2 (PLA2) that weakly inhibits ADP-induced platelet aggregation when tested on platelet rich plasma from human and rabbit blood (15-25% of inhibition at 5-10 ug of enzyme). Exhibits moderate hydrolytic activities toward L-dipalmitoyl phosphatidylcholine. PLA2 catalyzes the calcium-dependent hydrolysis of the 2-acyl groups in 3-sn-phosphoglycerides. This Craspedocephalus puniceus (Flat-nosed pitviper) protein is Acidic phospholipase A2 Tpu-E6b.